We begin with the raw amino-acid sequence, 349 residues long: MSKIRVLCVDDSALMRQLMTEIINSHPDMEMVAAAQDPLVARDLIKKFNPQVLTLDVEMPRMDGLDFLEKLMRLRPMPVVMVSSLTGKNSEITMRALELGAIDFVTKPQLGIREGMLAYSELIADKIRTAAKARLPQRVLENKPAMLSHTPLLSSEKLIAIGASTGGTEAIRAVLQPLPPTSPALLITQHMPPGFTRSFAERLNKLCQITVKEAEDGERVLPGHAYIAPGDRHLELARSGANYQVRIHDGPAVNRHRPSVDVLFRSVAQYAGRNAVGVILTGMGNDGAAGLLEMHRAGAYTLAQNEASCVVFGMPREAIAMGGVNDVVELNQISQRMLAQISSGQALRI.

In terms of domain architecture, Response regulatory spans 5–122 (RVLCVDDSAL…REGMLAYSEL (118 aa)). Aspartate 56 is subject to 4-aspartylphosphate. The CheB-type methylesterase domain maps to 152–344 (LLSSEKLIAI…QRMLAQISSG (193 aa)). Active-site residues include serine 164, histidine 190, and aspartate 286.

It belongs to the CheB family. Post-translationally, phosphorylated by CheA. Phosphorylation of the N-terminal regulatory domain activates the methylesterase activity.

The protein resides in the cytoplasm. The catalysed reaction is [protein]-L-glutamate 5-O-methyl ester + H2O = L-glutamyl-[protein] + methanol + H(+). It carries out the reaction L-glutaminyl-[protein] + H2O = L-glutamyl-[protein] + NH4(+). Functionally, involved in chemotaxis. Part of a chemotaxis signal transduction system that modulates chemotaxis in response to various stimuli. Catalyzes the demethylation of specific methylglutamate residues introduced into the chemoreceptors (methyl-accepting chemotaxis proteins or MCP) by CheR. Also mediates the irreversible deamidation of specific glutamine residues to glutamic acid. The chain is Protein-glutamate methylesterase/protein-glutamine glutaminase from Yersinia pestis bv. Antiqua (strain Antiqua).